A 95-amino-acid chain; its full sequence is Aspartyl/glutamyl-tRNA(Asn/Gln) amidotransferase subunit C (95 aa).

It belongs to the GatC family. Heterotrimer of A, B and C subunits.

It catalyses the reaction L-glutamyl-tRNA(Gln) + L-glutamine + ATP + H2O = L-glutaminyl-tRNA(Gln) + L-glutamate + ADP + phosphate + H(+). The enzyme catalyses L-aspartyl-tRNA(Asn) + L-glutamine + ATP + H2O = L-asparaginyl-tRNA(Asn) + L-glutamate + ADP + phosphate + 2 H(+). Allows the formation of correctly charged Asn-tRNA(Asn) or Gln-tRNA(Gln) through the transamidation of misacylated Asp-tRNA(Asn) or Glu-tRNA(Gln) in organisms which lack either or both of asparaginyl-tRNA or glutaminyl-tRNA synthetases. The reaction takes place in the presence of glutamine and ATP through an activated phospho-Asp-tRNA(Asn) or phospho-Glu-tRNA(Gln). In Brucella anthropi (strain ATCC 49188 / DSM 6882 / CCUG 24695 / JCM 21032 / LMG 3331 / NBRC 15819 / NCTC 12168 / Alc 37) (Ochrobactrum anthropi), this protein is Aspartyl/glutamyl-tRNA(Asn/Gln) amidotransferase subunit C.